The sequence spans 180 residues: Dynactin subunit 6 (180 aa).

This sequence belongs to the dynactin subunits 5/6 family. Dynactin subunit 6 subfamily. As to quaternary structure, subunit of dynactin, a multiprotein complex part of a tripartite complex with dynein and a adapter, such as BICDL1, BICD2 or HOOK3. The dynactin complex is built around ACTR1A/ACTB filament and consists of an actin-related filament composed of a shoulder domain, a pointed end and a barbed end.

The protein localises to the cytoplasm. It is found in the cytoskeleton. Functionally, part of the dynactin complex that activates the molecular motor dynein for ultra-processive transport along microtubules. This chain is Dynactin subunit 6 (dnc-6), found in Caenorhabditis elegans.